The following is a 151-amino-acid chain: Endoribonuclease YbeY (151 aa).

Zn(2+) contacts are provided by His-108, His-112, and Asp-118.

Belongs to the endoribonuclease YbeY family. Requires Zn(2+) as cofactor.

It is found in the cytoplasm. Its function is as follows. Single strand-specific metallo-endoribonuclease involved in late-stage 70S ribosome quality control and in maturation of the 3' terminus of the 16S rRNA. In Porphyromonas gingivalis (strain ATCC BAA-308 / W83), this protein is Endoribonuclease YbeY.